A 61-amino-acid polypeptide reads, in one-letter code: MSSKGEQPLVLWYNQLGMHDVDRVGGKNPSLGEMITNLSSLGVSVPNGFATTSYAFNLFLD.

This sequence belongs to the PEP-utilizing enzyme family. It depends on Mg(2+) as a cofactor.

It carries out the reaction pyruvate + ATP + H2O = phosphoenolpyruvate + AMP + phosphate + 2 H(+). The protein operates within carbohydrate biosynthesis; gluconeogenesis. Its function is as follows. Catalyzes the phosphorylation of pyruvate to phosphoenolpyruvate. The chain is Phosphoenolpyruvate synthase (ppsA) from Enterobacter agglomerans (Erwinia herbicola).